A 156-amino-acid chain; its full sequence is Ubiquitin-like protein 4A (156 aa).

Positions 1 to 76 constitute a Ubiquitin-like domain; it reads MILTVKPLQG…LNLVIRPVGE (76 aa).

Component of the bag6/bat3 complex.

Its subcellular location is the cytoplasm. The protein resides in the cytosol. It is found in the nucleus. In terms of biological role, as part of a cytosolic protein quality control complex, the bag6/bat3 complex, maintains misfolded and hydrophobic patches-containing proteins in a soluble state and participates in their proper delivery to the endoplasmic reticulum or alternatively can promote their sorting to the proteasome where they undergo degradation. The bag6/bat3 complex is involved in the post-translational delivery of tail-anchored/type II transmembrane proteins to the endoplasmic reticulum membrane. Similarly, the bag6/bat3 complex also functions as a sorting platform for proteins of the secretory pathway that are mislocalized to the cytosol either delivering them to the proteasome for degradation or to the endoplasmic reticulum. The bag6/bat3 complex also plays a role in the endoplasmic reticulum-associated degradation (ERAD), a quality control mechanism that eliminates unwanted proteins of the endoplasmic reticulum through their retrotranslocation to the cytosol and their targeting to the proteasome. It maintains these retrotranslocated proteins in an unfolded yet soluble state condition in the cytosol to ensure their proper delivery to the proteasome. This Anoplopoma fimbria (Sablefish) protein is Ubiquitin-like protein 4A (ubl4a).